The following is a 425-amino-acid chain: Serine--tRNA ligase (425 aa).

230 to 232 (TAE) contributes to the L-serine binding site. 261 to 263 (RSE) provides a ligand contact to ATP. Glutamate 284 contributes to the L-serine binding site. 348–351 (EISS) contributes to the ATP binding site. Residue serine 384 coordinates L-serine.

It belongs to the class-II aminoacyl-tRNA synthetase family. Type-1 seryl-tRNA synthetase subfamily. Homodimer. The tRNA molecule binds across the dimer.

Its subcellular location is the cytoplasm. The catalysed reaction is tRNA(Ser) + L-serine + ATP = L-seryl-tRNA(Ser) + AMP + diphosphate + H(+). It carries out the reaction tRNA(Sec) + L-serine + ATP = L-seryl-tRNA(Sec) + AMP + diphosphate + H(+). It functions in the pathway aminoacyl-tRNA biosynthesis; selenocysteinyl-tRNA(Sec) biosynthesis; L-seryl-tRNA(Sec) from L-serine and tRNA(Sec): step 1/1. In terms of biological role, catalyzes the attachment of serine to tRNA(Ser). Is also able to aminoacylate tRNA(Sec) with serine, to form the misacylated tRNA L-seryl-tRNA(Sec), which will be further converted into selenocysteinyl-tRNA(Sec). The protein is Serine--tRNA ligase of Streptococcus pyogenes serotype M4 (strain MGAS10750).